We begin with the raw amino-acid sequence, 176 residues long: Woronin body major protein (176 aa).

The propeptide occupies 1-16 (MGYYDDDAHGHVEADA). Over residues 1–16 (MGYYDDDAHGHVEADA) the composition is skewed to basic and acidic residues. Residues 1–31 (MGYYDDDAHGHVEADAAPRATTGTGTGSASQ) form a disordered region. A Microbody targeting signal motif is present at residues 174-176 (SRL).

The protein belongs to the eIF-5A family. Hex1 subfamily. In terms of assembly, forms oligomers. Self-assembles into hexagonal rods.

It localises to the cell septum. In terms of biological role, major component of Woronin bodies, fungal-specific organelles that occlude septal pores in order to separate intact from damaged compartments. Hex-1 binds directly or indirectly to the Woronin body tether that in turn is anchored at the rim of the septal pore. This is Woronin body major protein from Neurospora crassa (strain ATCC 24698 / 74-OR23-1A / CBS 708.71 / DSM 1257 / FGSC 987).